A 175-amino-acid chain; its full sequence is Gamma-crystallin A (175 aa).

2 Beta/gamma crystallin 'Greek key' domains span residues 2–40 (GKIT…RVDV) and 41–83 (HSWF…RLIP). The interval 84–88 (QHTGT) is connecting peptide. 2 consecutive Beta/gamma crystallin 'Greek key' domains span residues 89–129 (FRMR…RVLE) and 130–172 (GSWV…RRVM).

It belongs to the beta/gamma-crystallin family.

Its function is as follows. Crystallins are the dominant structural components of the vertebrate eye lens. The chain is Gamma-crystallin A (CRYGA) from Bos taurus (Bovine).